A 637-amino-acid chain; its full sequence is Threonine--tRNA ligase (637 aa).

One can recognise a TGS domain in the interval 1 to 61; that stretch reads MVTVTLPDGS…DADAQLAIVT (61 aa). The tract at residues 244 to 535 is catalytic; the sequence is DHRRLAKQLD…LIEHHAGNFP (292 aa). Positions 335, 386, and 512 each coordinate Zn(2+).

It belongs to the class-II aminoacyl-tRNA synthetase family. In terms of assembly, homodimer. Zn(2+) serves as cofactor.

It localises to the cytoplasm. The catalysed reaction is tRNA(Thr) + L-threonine + ATP = L-threonyl-tRNA(Thr) + AMP + diphosphate + H(+). In terms of biological role, catalyzes the attachment of threonine to tRNA(Thr) in a two-step reaction: L-threonine is first activated by ATP to form Thr-AMP and then transferred to the acceptor end of tRNA(Thr). Also edits incorrectly charged L-seryl-tRNA(Thr). This Thiobacillus denitrificans (strain ATCC 25259 / T1) protein is Threonine--tRNA ligase.